The following is a 399-amino-acid chain: Ankyrin repeat domain-containing protein 65 (399 aa).

ANK repeat units lie at residues 40-69 (QGWGHLLQAVWRGPAGLVTQLLRQGASVEE), 73-102 (AGRTPLHLAVLRGHAPLVRLLLQRGAPVGA), 106-135 (AGRTALHEAAWHGHSRVAELLLQRGASAAA), 139-168 (TGLTPLHWAAALGHTLLAARLLEAPGPGPA), 176-205 (RGWTAAHWAAAGGRLAVLELLAAGGAGLDG), 207-231 (LLVAAAAGRGAALRFLLARGARVDA), 235-264 (AGATALGLAAALGRSQDIEVLLGHGADPGI), 268-297 (HGRSALHRAAARGHLLAVQLLVTQGAEVDA), 301-330 (LGLTPLHHASREGHVEVAGCLLDRGAQVDA), and 334-363 (LRKTPLHLAAERGHGPTVGLLLSRGASPTL). The interval 377–399 (DLPQALPELGGGEKECEGIESTG) is disordered.

This Homo sapiens (Human) protein is Ankyrin repeat domain-containing protein 65 (ANKRD65).